Reading from the N-terminus, the 324-residue chain is GDP-mannose transporter (324 aa).

The Cytoplasmic portion of the chain corresponds to 1–13 (MSELKSRIGNSGS). Residues 14–34 (IANSGPVSILCYCASSILMTV) form a helical membrane-spanning segment. At 35 to 44 (TNKFVVNTDG) the chain is on the lumenal side. A helical transmembrane segment spans residues 45 to 65 (FNMFFVMLFAQSLVCTMCLMV). Residues 66-76 (LKMFGYAKYRP) are Cytoplasmic-facing. A helical transmembrane segment spans residues 77-97 (LNLIDVKNWLPISFLLVFMIF). Over 98–116 (TSAKALKYMPVPIYTIFKN) the chain is Lumenal. Asn116 carries an N-linked (GlcNAc...) asparagine glycan. Residues 117 to 137 (LTIILIAYGEVLFFGGSVTPM) form a helical membrane-spanning segment. Position 138 (Glu138) is a topological domain, cytoplasmic. The helical transmembrane segment at 139-159 (LSSFILMVLSSVVASLGDQQA) threads the bilayer. Topologically, residues 160 to 170 (AKIAQPLANNS) are lumenal. An N-linked (GlcNAc...) asparagine glycan is attached at Asn168. A helical transmembrane segment spans residues 171 to 191 (ILSPEYYWMFLNCICSASFVL). Residues 192–204 (IMRKRIKLTNFKD) lie on the Cytoplasmic side of the membrane. The chain crosses the membrane as a helical span at residues 205–225 (YDTMFYNNALALPILLGFSFL). The Lumenal segment spans residues 226–243 (SEDWSSENLAQNFSGESL). The N-linked (GlcNAc...) asparagine glycan is linked to Asn237. The helical transmembrane segment at 244 to 264 (SAMIISGMTSVGISYCSGWCV) threads the bilayer. Residues 265–270 (RATSST) lie on the Cytoplasmic side of the membrane. The chain crosses the membrane as a helical span at residues 271 to 291 (TYSMVGALNKLPIALAGLIFF). The Lumenal portion of the chain corresponds to 292–295 (DAPR). Residues 296–316 (NFLSIMSIFIGFASGLSYAVA) traverse the membrane as a helical segment. Over 317 to 324 (KQKKVQKN) the chain is Cytoplasmic.

This sequence belongs to the TPT transporter family. SLC35D subfamily. As to quaternary structure, homooligomer.

It is found in the golgi apparatus membrane. Its subcellular location is the cytoplasmic vesicle membrane. The protein resides in the endoplasmic reticulum membrane. Involved in the import of GDP-mannose from the cytoplasm into the Golgi lumen. This is GDP-mannose transporter (VRG4) from Candida glabrata (strain ATCC 2001 / BCRC 20586 / JCM 3761 / NBRC 0622 / NRRL Y-65 / CBS 138) (Yeast).